A 90-amino-acid chain; its full sequence is Probable Fe(2+)-trafficking protein (90 aa).

Belongs to the Fe(2+)-trafficking protein family. In terms of assembly, monomer.

Could be a mediator in iron transactions between iron acquisition and iron-requiring processes, such as synthesis and/or repair of Fe-S clusters in biosynthetic enzymes. In Serratia proteamaculans (strain 568), this protein is Probable Fe(2+)-trafficking protein.